We begin with the raw amino-acid sequence, 459 residues long: Cysteine--tRNA ligase (459 aa).

Cysteine 28 contributes to the Zn(2+) binding site. Positions 30-40 match the 'HIGH' region motif; the sequence is VTVYDLCHIGH. Zn(2+) contacts are provided by cysteine 209, histidine 234, and glutamate 238. The 'KMSKS' region motif lies at 266–270; that stretch reads KMSKS. Lysine 269 contacts ATP.

The protein belongs to the class-I aminoacyl-tRNA synthetase family. Monomer. The cofactor is Zn(2+).

The protein localises to the cytoplasm. It carries out the reaction tRNA(Cys) + L-cysteine + ATP = L-cysteinyl-tRNA(Cys) + AMP + diphosphate. The chain is Cysteine--tRNA ligase from Haemophilus influenzae (strain PittGG).